We begin with the raw amino-acid sequence, 277 residues long: Adenylate kinase (277 aa).

72 to 77 contributes to the ATP binding site; that stretch reads GAGKGT. The tract at residues 92 to 121 is NMP; that stretch reads ATGDMLRSQVAKQTALGVQAKKIMDQGGLV. AMP contacts are provided by residues T93, R98, 119–121, 148–151, and Q155; these read GLV and GFPR. Positions 189–226 are LID; sequence GRLVHPASGRSYHKLFNPPKVAMTDDVTGDPLVQRSDD. ATP-binding positions include R190 and 199–200; that span reads SY. The AMP site is built by R223 and R234. Q262 lines the ATP pocket.

It belongs to the adenylate kinase family. AK2 subfamily. As to quaternary structure, monomer.

It is found in the cytoplasm. Its subcellular location is the cytosol. The protein localises to the mitochondrion intermembrane space. The catalysed reaction is AMP + ATP = 2 ADP. Functionally, catalyzes the reversible transfer of the terminal phosphate group between ATP and AMP. Plays an important role in cellular energy homeostasis and in adenine nucleotide metabolism. Adenylate kinase activity is critical for regulation of the phosphate utilization and the AMP de novo biosynthesis pathways. The sequence is that of Adenylate kinase from Eremothecium gossypii (strain ATCC 10895 / CBS 109.51 / FGSC 9923 / NRRL Y-1056) (Yeast).